The following is a 116-amino-acid chain: Transcription initiation factor IIA subunit 2 (116 aa).

The protein belongs to the TFIIA subunit 2 family. TFIIA is a heterodimer composed of the large TOA1 and the small TOA2 subunits.

The protein localises to the nucleus. In terms of biological role, TFIIA is a component of the transcription machinery of RNA polymerase II and plays an important role in transcriptional activation. TFIIA in a complex with tbp mediates transcriptional activity. This is Transcription initiation factor IIA subunit 2 (TOA2) from Pyricularia oryzae (strain 70-15 / ATCC MYA-4617 / FGSC 8958) (Rice blast fungus).